The chain runs to 392 residues: Succinate--CoA ligase [ADP-forming] subunit beta (392 aa).

The ATP-grasp domain occupies 9–248 (KGLFRDYGVS…LHEEDPTEVK (240 aa)). ATP-binding positions include Lys50, 57-59 (GRG), Val106, and Glu111. Residues Asn203 and Asp217 each coordinate Mg(2+). Residues Asn268 and 325-327 (GIV) each bind substrate.

Belongs to the succinate/malate CoA ligase beta subunit family. In terms of assembly, heterotetramer of two alpha and two beta subunits. The cofactor is Mg(2+).

The catalysed reaction is succinate + ATP + CoA = succinyl-CoA + ADP + phosphate. It catalyses the reaction GTP + succinate + CoA = succinyl-CoA + GDP + phosphate. The protein operates within carbohydrate metabolism; tricarboxylic acid cycle; succinate from succinyl-CoA (ligase route): step 1/1. Succinyl-CoA synthetase functions in the citric acid cycle (TCA), coupling the hydrolysis of succinyl-CoA to the synthesis of either ATP or GTP and thus represents the only step of substrate-level phosphorylation in the TCA. The beta subunit provides nucleotide specificity of the enzyme and binds the substrate succinate, while the binding sites for coenzyme A and phosphate are found in the alpha subunit. In Salinibacter ruber (strain DSM 13855 / M31), this protein is Succinate--CoA ligase [ADP-forming] subunit beta.